We begin with the raw amino-acid sequence, 429 residues long: Esterase/beta-lactamase LipL (429 aa).

The active-site Acyl-ester intermediate is serine 88.

It belongs to the beta-lactamase family.

The protein resides in the secreted. It localises to the cell wall. Its subcellular location is the cell membrane. It catalyses the reaction a fatty acid ester + H2O = an aliphatic alcohol + a fatty acid + H(+). It carries out the reaction an acetyl ester + H2O = an aliphatic alcohol + acetate + H(+). The catalysed reaction is a butanoate ester + H2O = an aliphatic alcohol + butanoate + H(+). The enzyme catalyses an octanoate ester + H2O = an aliphatic alcohol + octanoate + H(+). It catalyses the reaction decanoate ester + H2O = decanoate + an aliphatic alcohol + H(+). It carries out the reaction a dodecanoate ester + H2O = an aliphatic alcohol + dodecanoate + H(+). The catalysed reaction is a tetradecanoate ester + H2O = an aliphatic alcohol + tetradecanoate + H(+). The enzyme catalyses hexadecanoate ester + H2O = an aliphatic alcohol + hexadecanoate + H(+). It catalyses the reaction octadecanoate ester + H2O = an aliphatic alcohol + octadecanoate + H(+). It carries out the reaction a hexanoate ester + H2O = an aliphatic alcohol + hexanoate + H(+). The catalysed reaction is a beta-lactam + H2O = a substituted beta-amino acid. With respect to regulation, esterase and beta-lactamase activities are inhibited by the active site residue modifiers phenylmethanesulfonylflouride (PMSF) and diethylpyrocarbonate (DEPC). Shows both esterase and beta-lactamase activities, with a much higher activity against phenyl esters than against beta-lactams. Shows esterase activity against both long-chain and short-chain p-nitrophenol (pNP) esters, with a preference for shorter chain esters. Hydrolyzes substrates containing beta-lactam ring such as nitrocefin and ampicillin. Functions as an immunogen that activates both humoral and cell-mediated responses. The protein is Esterase/beta-lactamase LipL of Mycobacterium tuberculosis (strain ATCC 25618 / H37Rv).